Consider the following 63-residue polypeptide: Alpha-conotoxin-like PuSG1.2 (63 aa).

Positions 1–21 (MRCLALLVVTLLLFTATATTG) are cleaved as a signal peptide. Residues 22–43 (ASNGMNAAASGEAPDSISLAVR) constitute a propeptide that is removed on maturation. Cystine bridges form between C46/C52 and C47/C60. The lacks the Ser-Xaa-Pro motif that is crucial for potent interaction with nAChR stretch occupies residues 48-50 (PDP).

The protein belongs to the conotoxin A superfamily. Expressed by the salivary gland.

Its subcellular location is the secreted. Its function is as follows. Alpha-conopeptides-like may act on postsynaptic membranes, they bind to the nicotinic acetylcholine receptors (nAChR) and thus inhibit them. Has possibly a distinct nAChR binding mode from other alpha-conotoxins, due to a different three residue motif (lacks the Ser-Xaa-Pro motif). This chain is Alpha-conotoxin-like PuSG1.2, found in Conus pulicarius (Flea-bitten cone).